A 304-amino-acid polypeptide reads, in one-letter code: Ribosomal RNA large subunit methyltransferase F (304 aa).

The protein belongs to the methyltransferase superfamily. METTL16/RlmF family.

It is found in the cytoplasm. The catalysed reaction is adenosine(1618) in 23S rRNA + S-adenosyl-L-methionine = N(6)-methyladenosine(1618) in 23S rRNA + S-adenosyl-L-homocysteine + H(+). Functionally, specifically methylates the adenine in position 1618 of 23S rRNA. The sequence is that of Ribosomal RNA large subunit methyltransferase F from Klebsiella pneumoniae subsp. pneumoniae (strain ATCC 700721 / MGH 78578).